The sequence spans 299 residues: Methionine aminopeptidase (299 aa).

Residue His-64 participates in substrate binding. Residues Asp-84, Asp-95, and His-158 each contribute to the a divalent metal cation site. Position 166 (His-166) interacts with substrate. Glu-191 and Glu-284 together coordinate a divalent metal cation.

It belongs to the peptidase M24A family. Methionine aminopeptidase archaeal type 2 subfamily. Monomer. The cofactor is Co(2+). Zn(2+) is required as a cofactor. It depends on Mn(2+) as a cofactor. Requires Fe(2+) as cofactor.

The enzyme catalyses Release of N-terminal amino acids, preferentially methionine, from peptides and arylamides.. Functionally, removes the N-terminal methionine from nascent proteins. The N-terminal methionine is often cleaved when the second residue in the primary sequence is small and uncharged (Met-Ala-, Cys, Gly, Pro, Ser, Thr, or Val). The sequence is that of Methionine aminopeptidase from Methanothermobacter thermautotrophicus (strain ATCC 29096 / DSM 1053 / JCM 10044 / NBRC 100330 / Delta H) (Methanobacterium thermoautotrophicum).